Here is a 369-residue protein sequence, read N- to C-terminus: Methionine import ATP-binding protein MetN 1 (369 aa).

The ABC transporter domain maps to 29 to 265; sequence IRLHGLGKRY…PRHAVTRSLL (237 aa). 62-69 contacts ATP; the sequence is GRSGAGKS.

It belongs to the ABC transporter superfamily. Methionine importer (TC 3.A.1.24) family. In terms of assembly, the complex is composed of two ATP-binding proteins (MetN), two transmembrane proteins (MetI) and a solute-binding protein (MetQ).

It is found in the cell inner membrane. The catalysed reaction is L-methionine(out) + ATP + H2O = L-methionine(in) + ADP + phosphate + H(+). The enzyme catalyses D-methionine(out) + ATP + H2O = D-methionine(in) + ADP + phosphate + H(+). In terms of biological role, part of the ABC transporter complex MetNIQ involved in methionine import. Responsible for energy coupling to the transport system. In Pseudomonas aeruginosa (strain ATCC 15692 / DSM 22644 / CIP 104116 / JCM 14847 / LMG 12228 / 1C / PRS 101 / PAO1), this protein is Methionine import ATP-binding protein MetN 1.